A 178-amino-acid chain; its full sequence is MDEILEEELEKKESEEFEERIVEIRRTAKVTKGGKTLSFRVLAVVGNRKGKVGVGVGKAREVPEAIRKAIAAARASVVEIPLYKTTIPHEVFGRQDASKVLLRPAAPGTGIIAGSTVRAVVELAGVQNVLTKCLGSTASVNLALATLNGLKDLVSPEKAAKLRDITPAQVLYGARKEA.

The S5 DRBM domain occupies 17–80 (FEERIVEIRR…AAARASVVEI (64 aa)).

The protein belongs to the universal ribosomal protein uS5 family. Part of the 30S ribosomal subunit. Contacts proteins S4 and S8.

With S4 and S12 plays an important role in translational accuracy. Functionally, located at the back of the 30S subunit body where it stabilizes the conformation of the head with respect to the body. This Pseudothermotoga lettingae (strain ATCC BAA-301 / DSM 14385 / NBRC 107922 / TMO) (Thermotoga lettingae) protein is Small ribosomal subunit protein uS5.